The following is a 713-amino-acid chain: Cyclomaltodextrin glucanotransferase (713 aa).

The N-terminal stretch at 1-27 (MKKISKLTTALALSLSLALSLLGPAHA) is a signal peptide. The A1 stretch occupies residues 28–165 (APDTSVSNKQ…NIKVIIDFAP (138 aa)). The Ca(2+) site is built by D54, N56, N59, and N60. C70 and C77 are joined by a disulfide. Ca(2+)-binding residues include G78 and D80. 127–128 (YW) lines the substrate pocket. N166 serves as a coordination point for Ca(2+). Residues 166-229 (NHTSPASLDQ…NLYDLADLNH (64 aa)) form a b region. H167 contacts substrate. Residue I217 coordinates Ca(2+). 220–223 (NLYD) is a binding site for substrate. D226 contacts Ca(2+). The A2 stretch occupies residues 230–433 (NNSTVDTYLK…LRKSNPAIAY (204 aa)). A substrate-binding site is contributed by R254. The Nucleophile role is filled by D256. 259-260 (KH) is a binding site for substrate. H260 contributes to the Ca(2+) binding site. Residue E284 is the Proton donor of the active site. Substrate-binding residues include H354, D398, and R402. The tract at residues 434 to 522 (GTTQERWINN…GTAVWQYTTA (89 aa)) is c. The d stretch occupies residues 523-609 (VTAPTIGHVG…SNVHDNFEVL (87 aa)). The 82-residue stretch at 526–607 (PTIGHVGPMM…TSSNVHDNFE (82 aa)) folds into the IPT/TIG domain. Residues 608-713 (VLSGDQVSVR…TATINVNWQP (106 aa)) form the CBM20 domain. The segment at 610–713 (SGDQVSVRFV…TATINVNWQP (104 aa)) is e.

This sequence belongs to the glycosyl hydrolase 13 family. In terms of assembly, monomer. Ca(2+) is required as a cofactor.

Its subcellular location is the secreted. The catalysed reaction is Cyclizes part of a (1-&gt;4)-alpha-D-glucan chain by formation of a (1-&gt;4)-alpha-D-glucosidic bond.. This Bacillus sp. (strain 17-1) protein is Cyclomaltodextrin glucanotransferase (cgt).